We begin with the raw amino-acid sequence, 950 residues long: Glycine dehydrogenase (decarboxylating) (950 aa).

Lysine 699 carries the post-translational modification N6-(pyridoxal phosphate)lysine.

Belongs to the GcvP family. The glycine cleavage system is composed of four proteins: P, T, L and H. Pyridoxal 5'-phosphate is required as a cofactor.

The catalysed reaction is N(6)-[(R)-lipoyl]-L-lysyl-[glycine-cleavage complex H protein] + glycine + H(+) = N(6)-[(R)-S(8)-aminomethyldihydrolipoyl]-L-lysyl-[glycine-cleavage complex H protein] + CO2. Its function is as follows. The glycine cleavage system catalyzes the degradation of glycine. The P protein binds the alpha-amino group of glycine through its pyridoxal phosphate cofactor; CO(2) is released and the remaining methylamine moiety is then transferred to the lipoamide cofactor of the H protein. The polypeptide is Glycine dehydrogenase (decarboxylating) (Chromobacterium violaceum (strain ATCC 12472 / DSM 30191 / JCM 1249 / CCUG 213 / NBRC 12614 / NCIMB 9131 / NCTC 9757 / MK)).